Reading from the N-terminus, the 941-residue chain is Pre-mRNA-processing factor 6 (941 aa).

Positions 1 to 79 (MNKKKKPFLG…DEDLNDTNYD (79 aa)) are disordered. The segment covering 39-65 (DANDPVDDRHAPPGKRTVGDQMKKNQA) has biased composition (basic and acidic residues). Over residues 66-78 (ADDDDEDLNDTNY) the composition is skewed to acidic residues. At S143 the chain carries Phosphoserine. A phosphothreonine mark is found at T180, T266, and T275. The residue at position 279 (S279) is a Phosphoserine. HAT repeat units follow at residues 384 to 416 (TDIRAKKRVLRKALEHVPNSVRLWKAAVELEEP), 418 to 444 (DARIMLSRAVECCPTSVELWLALARLE), 445 to 476 (TYENARKVLNKARENIPTDRHIWITAAKLEEA), 554 to 586 (NALECARAIYAYALQVFPSKKSVWLRAAYFGKN), 588 to 620 (GTRESLEALLQRAVAHCPKAEVLWLMGAKSKWL), 622 to 654 (GDVPAARSILALAFQANPNSEEIWLAAVKLESE), 689 to 721 (DNIRAAQDLCEEALRHYEDFPKLWMMKGQIEEQ), 723 to 755 (EMMEKAREAYNQGLKKCPHSTPLWLLLSRLEEK), and 855 to 887 (RKITKAREWFHRTVKIDSDLGDAWAFFYKFELQ).

Identified in the spliceosome B complex. Identified in the spliceosome C complex. Associates with the U5 snRNP particle. Component of the U4/U6-U5 tri-snRNP complex composed of the U4, U6 and U5 snRNAs and at least PRPF3, PRPF4, PRPF6, PRPF8, PRPF31, SNRNP200, TXNL4A, SNRNP40, DDX23, CD2BP2, PPIH, SNU13, EFTUD2, SART1 and USP39, LSm proteins LSm2-8 and Sm proteins. Interacts with ARAF1. Interacts with AR and NR3C1, but not ESR1, independently of the presence of hormones. Interacts with USH1G. In terms of processing, phosphorylated by PRP4K during spliceosome assembly.

It is found in the nucleus. The protein localises to the nucleoplasm. It localises to the nucleus speckle. Functionally, involved in pre-mRNA splicing as component of the U4/U6-U5 tri-snRNP complex, one of the building blocks of the spliceosome. Enhances dihydrotestosterone-induced transactivation activity of AR, as well as dexamethasone-induced transactivation activity of NR3C1, but does not affect estrogen-induced transactivation. This is Pre-mRNA-processing factor 6 (PRPF6) from Pongo abelii (Sumatran orangutan).